Here is a 493-residue protein sequence, read N- to C-terminus: Galactose-1-phosphate uridylyltransferase (493 aa).

Belongs to the galactose-1-phosphate uridylyltransferase type 2 family.

Its subcellular location is the cytoplasm. It catalyses the reaction alpha-D-galactose 1-phosphate + UDP-alpha-D-glucose = alpha-D-glucose 1-phosphate + UDP-alpha-D-galactose. Its pathway is carbohydrate metabolism; galactose metabolism. The chain is Galactose-1-phosphate uridylyltransferase from Streptococcus pneumoniae (strain Hungary19A-6).